A 358-amino-acid chain; its full sequence is Phosphoserine aminotransferase (358 aa).

L-glutamate is bound at residue Arg-41. Pyridoxal 5'-phosphate contacts are provided by residues Ala-75–Ser-76, Trp-100, Thr-148, Asp-167, and Gln-190. At Lys-191 the chain carries N6-(pyridoxal phosphate)lysine. Asn-233–Thr-234 lines the pyridoxal 5'-phosphate pocket.

Belongs to the class-V pyridoxal-phosphate-dependent aminotransferase family. SerC subfamily. As to quaternary structure, homodimer. Requires pyridoxal 5'-phosphate as cofactor.

The protein resides in the cytoplasm. It catalyses the reaction O-phospho-L-serine + 2-oxoglutarate = 3-phosphooxypyruvate + L-glutamate. It carries out the reaction 4-(phosphooxy)-L-threonine + 2-oxoglutarate = (R)-3-hydroxy-2-oxo-4-phosphooxybutanoate + L-glutamate. It functions in the pathway amino-acid biosynthesis; L-serine biosynthesis; L-serine from 3-phospho-D-glycerate: step 2/3. The protein operates within cofactor biosynthesis; pyridoxine 5'-phosphate biosynthesis; pyridoxine 5'-phosphate from D-erythrose 4-phosphate: step 3/5. In terms of biological role, catalyzes the reversible conversion of 3-phosphohydroxypyruvate to phosphoserine and of 3-hydroxy-2-oxo-4-phosphonooxybutanoate to phosphohydroxythreonine. This chain is Phosphoserine aminotransferase, found in Campylobacter jejuni subsp. doylei (strain ATCC BAA-1458 / RM4099 / 269.97).